The primary structure comprises 875 residues: Kelch-like protein 29 (875 aa).

Over residues 115–126 (WGQTPINQSTPW) the composition is skewed to polar residues. 2 disordered regions span residues 115–145 (WGQTPINQSTPWDTDEPPSKQMRESDNPGTG) and 248–291 (GPTA…DSAH). The segment covering 131-140 (PPSKQMRESD) has biased composition (basic and acidic residues). One can recognise a BTB domain in the interval 329–401 (TDLKIVVEGR…VYTGSLVIDS (73 aa)). Kelch repeat units follow at residues 585–635 (VIVL…VSAG), 637–683 (NIYL…VYDG), 684–730 (KIYT…VCGG), 732–778 (IYVF…TLNG), 779–821 (FVFI…VLDG), and 822–870 (KIYA…VIKK).

The polypeptide is Kelch-like protein 29 (KLHL29) (Homo sapiens (Human)).